A 417-amino-acid chain; its full sequence is Transcobalamin-1 (417 aa).

A signal peptide spans 1 to 25 (MRQSHQLPLVGLLLFSLIPSQLCQS). Positions 24–308 (QSCVVSEKDY…DVTKLLLVPK (285 aa)) are globular N-terminal alpha domain. N90 carries N-linked (GlcNAc...) asparagine glycosylation. 143 to 147 (TNYYQ) is a cyanocob(III)alamin binding site. C156 and C198 form a disulfide bridge. Residues N161, N166, and N179 are each glycosylated (N-linked (GlcNAc...) asparagine). Cyanocob(III)alamin-binding residues include D187 and Q287. The tract at residues 309–327 (VQVNITDEPVPVVPTLSPE) is flexible linker. N-linked (GlcNAc...) asparagine glycans are attached at residues N312, N328, N345, and N360. The globular C-terminal beta domain stretch occupies residues 328-417 (NISVIYCVKI…GIMLSKMESI (90 aa)). Residues 376-377 (YI) and 393-395 (WEH) each bind cyanocob(III)alamin.

The protein belongs to the eukaryotic cobalamin transport proteins family. Contains about 30% carbohydrates. As to expression, haptocorrins are a family of cobalamin-binding glycoproteins found in blood, salivary and mucosal secretions.

The protein resides in the secreted. Its function is as follows. Binds vitamin B12 with femtomolar affinity and protects it from the acidic environment of the stomach. Binds to cobalamin and to cobalamin analogs such as cobinamide. This Sus scrofa (Pig) protein is Transcobalamin-1 (TCN1).